Here is a 377-residue protein sequence, read N- to C-terminus: Modification methylase CviBIII (377 aa).

The protein belongs to the N(4)/N(6)-methyltransferase family.

The enzyme catalyses a 2'-deoxyadenosine in DNA + S-adenosyl-L-methionine = an N(6)-methyl-2'-deoxyadenosine in DNA + S-adenosyl-L-homocysteine + H(+). In terms of biological role, a gamma subtype methylase that recognizes the double-stranded sequence 5'-TCGA-3' and methylates A-4 on both strands. In Paramecium bursaria Chlorella virus NC1A (PBCV-NC1A), this protein is Modification methylase CviBIII (CVIBIIIM).